Reading from the N-terminus, the 468-residue chain is Cell division protein FtsA (468 aa).

The interval N416–E468 is disordered. A compositionally biased stretch (acidic residues) spans V425–Q434. A compositionally biased stretch (basic and acidic residues) spans E436 to F459.

The protein belongs to the FtsA/MreB family. In terms of assembly, self-interacts. Interacts with FtsZ.

It is found in the cell membrane. Cell division protein that is involved in the assembly of the Z ring. May serve as a membrane anchor for the Z ring. The sequence is that of Cell division protein FtsA from Staphylococcus aureus (strain MRSA252).